A 206-amino-acid polypeptide reads, in one-letter code: Small ribosomal subunit protein uS5 (206 aa).

The span at 1–23 (MTDTPTKQENQSKTENPPSSNAN) shows a compositional bias: polar residues. The disordered stretch occupies residues 1–52 (MTDTPTKQENQSKTENPPSSNANEQRRGNRNNDRKRNRRGDSKNERDSEWQE). Basic and acidic residues predominate over residues 24–52 (EQRRGNRNNDRKRNRRGDSKNERDSEWQE). One can recognise an S5 DRBM domain in the interval 50 to 113 (WQERVVQIRR…SDGKKHLVRV (64 aa)).

Belongs to the universal ribosomal protein uS5 family. As to quaternary structure, part of the 30S ribosomal subunit. Contacts proteins S4 and S8.

With S4 and S12 plays an important role in translational accuracy. In terms of biological role, located at the back of the 30S subunit body where it stabilizes the conformation of the head with respect to the body. The sequence is that of Small ribosomal subunit protein uS5 from Prochlorococcus marinus subsp. pastoris (strain CCMP1986 / NIES-2087 / MED4).